The chain runs to 1006 residues: Collagen alpha-2(I) chain (1006 aa).

The tract at residues 1-84 (SGGFDFSFLP…GFPGTPGLPG (84 aa)) is disordered. 4-hydroxyproline is present on residues Pro-10, Pro-13, Pro-35, and Pro-41. Positions 28 to 64 (LMGPRGPPGASGAPGPQGFQGPAGEPGEPGQTGPAGA) are enriched in low complexity. Position 86 is a 5-hydroxylysine; alternate (Lys-86). O-linked (Gal...) hydroxylysine; alternate glycosylation is present at Lys-86. A disordered region spans residues 99–1006 (GQPGAAGVKG…FGYEGDFYRA (908 aa)). Low complexity-rich tracts occupy residues 142–163 (SRGS…SAGP) and 209–230 (PGAN…AGAP). Over residues 264–273 (GESGGKGEPG) the composition is skewed to gly residues. The span at 274–284 (SAGPQGPPGSS) shows a compositional bias: low complexity. Residues 306-315 (GLRGGPGSRG) show a composition bias toward gly residues. The span at 328–344 (PAGARGASGPAGVRGPS) shows a compositional bias: low complexity. Residues Pro-350 and Pro-353 each carry the 4-hydroxyproline modification. A compositionally biased stretch (low complexity) spans 379-398 (LPGIDGRPGPIGPAGARGEA). Residues 447 to 456 (GVQGGKGEQG) are compositionally biased toward gly residues. 2 stretches are compositionally biased toward low complexity: residues 503–520 (PGES…SRGP) and 532–542 (EPGVVGAPGTA). The segment covering 543–552 (GPAGSGGLPG) has biased composition (gly residues). Composition is skewed to low complexity over residues 585–615 (AVGA…PRGS) and 622–642 (VGPA…QPGA). Basic and acidic residues predominate over residues 643–652 (KGERGTKGPK). Residues 660–670 (PTGPVGSAGPA) are compositionally biased toward low complexity. Positions 680 to 689 (GSRGDGGPPG) are enriched in gly residues. Positions 691–700 (TGFPGAAGRT) are enriched in low complexity. The segment covering 737–746 (GETGAGGPPG) has biased composition (gly residues). 2 stretches are compositionally biased toward low complexity: residues 754–781 (SGEP…LGLP) and 789–799 (LPGVAGAVGEP). A compositionally biased stretch (gly residues) spans 800 to 810 (GPLGIGPPGAR). Positions 837 to 882 (YAGNPGPVGAAGAPGPHGAVGPAGKHGNRGEPGPVGSAGPVGALGP) are enriched in low complexity. Positions 892-903 (RGDKGEAGDKGP) are enriched in basic and acidic residues. Over residues 976–988 (SGPPGPPGPPGPP) the composition is skewed to pro residues.

It belongs to the fibrillar collagen family. Trimers of one alpha 2(I) and two alpha 1(I) chains. Interacts (via C-terminus) with TMEM131 (via PapD-L domain); the interaction is direct and is involved in assembly and TRAPPIII ER-to-Golgi transport complex-dependent secretion of collagen. Post-translationally, prolines at the third position of the tripeptide repeating unit (G-X-Y) are hydroxylated in some or all of the chains. In terms of tissue distribution, expressed in bones.

It localises to the secreted. It is found in the extracellular space. The protein resides in the extracellular matrix. In terms of biological role, type I collagen is a member of group I collagen (fibrillar forming collagen). The polypeptide is Collagen alpha-2(I) chain (Choloepus hoffmanni (Hoffmann's two-fingered sloth)).